The chain runs to 261 residues: MQDSPLIIGSRQFQSRLLVGTGKYKDLNETDLAIQASGAEIVTVAIRRVNIGQHADQPNLLSVIPPEKYTILPNTAGCFDADSAIRTCMLARELLDGHNLVKLEVLGDQDTLYPNITETLKAARTLIDDGFEIMVYTSDDPIVAKELESMGCVAIMPLGSLIGSGLGILNPHTISIIKENAKVPVLVDAGVGTASDAAIAMELGCDGVLMNTAIAAAQHPVLMASAMKKAIEAGREAFLAGRMPRKRMANASSPETGYFFK.

Residue Lys-102 is the Schiff-base intermediate with DXP of the active site. 1-deoxy-D-xylulose 5-phosphate is bound by residues Gly-163, 189 to 190 (AG), and 211 to 212 (NT).

Belongs to the ThiG family. Homotetramer. Forms heterodimers with either ThiH or ThiS.

The protein resides in the cytoplasm. The catalysed reaction is [ThiS sulfur-carrier protein]-C-terminal-Gly-aminoethanethioate + 2-iminoacetate + 1-deoxy-D-xylulose 5-phosphate = [ThiS sulfur-carrier protein]-C-terminal Gly-Gly + 2-[(2R,5Z)-2-carboxy-4-methylthiazol-5(2H)-ylidene]ethyl phosphate + 2 H2O + H(+). It functions in the pathway cofactor biosynthesis; thiamine diphosphate biosynthesis. Functionally, catalyzes the rearrangement of 1-deoxy-D-xylulose 5-phosphate (DXP) to produce the thiazole phosphate moiety of thiamine. Sulfur is provided by the thiocarboxylate moiety of the carrier protein ThiS. In vitro, sulfur can be provided by H(2)S. The polypeptide is Thiazole synthase (Acinetobacter baylyi (strain ATCC 33305 / BD413 / ADP1)).